Here is a 487-residue protein sequence, read N- to C-terminus: Probable glycine dehydrogenase (decarboxylating) subunit 2 (487 aa).

Lys269 is subject to N6-(pyridoxal phosphate)lysine.

The protein belongs to the GcvP family. C-terminal subunit subfamily. As to quaternary structure, the glycine cleavage system is composed of four proteins: P, T, L and H. In this organism, the P 'protein' is a heterodimer of two subunits. Pyridoxal 5'-phosphate is required as a cofactor.

The catalysed reaction is N(6)-[(R)-lipoyl]-L-lysyl-[glycine-cleavage complex H protein] + glycine + H(+) = N(6)-[(R)-S(8)-aminomethyldihydrolipoyl]-L-lysyl-[glycine-cleavage complex H protein] + CO2. Its function is as follows. The glycine cleavage system catalyzes the degradation of glycine. The P protein binds the alpha-amino group of glycine through its pyridoxal phosphate cofactor; CO(2) is released and the remaining methylamine moiety is then transferred to the lipoamide cofactor of the H protein. The sequence is that of Probable glycine dehydrogenase (decarboxylating) subunit 2 from Prosthecochloris aestuarii (strain DSM 271 / SK 413).